The chain runs to 362 residues: Protein U8 (362 aa).

The protein belongs to the herpesviridae US22 family.

The protein is Protein U8 (U8) of Human herpesvirus 7 (strain JI) (HHV-7).